The chain runs to 250 residues: Ribosomal RNA small subunit methyltransferase J (250 aa).

S-adenosyl-L-methionine contacts are provided by residues Arg102–Asp103, Glu118–Arg119, Ser154–Ser155, and Asp172.

This sequence belongs to the methyltransferase superfamily. RsmJ family.

The protein resides in the cytoplasm. The enzyme catalyses guanosine(1516) in 16S rRNA + S-adenosyl-L-methionine = N(2)-methylguanosine(1516) in 16S rRNA + S-adenosyl-L-homocysteine + H(+). In terms of biological role, specifically methylates the guanosine in position 1516 of 16S rRNA. This Edwardsiella ictaluri (strain 93-146) protein is Ribosomal RNA small subunit methyltransferase J.